We begin with the raw amino-acid sequence, 1807 residues long: MAGLCSSPWVKLLLAVVLSAGLPGNMANRCKKAQVKSCTECIRVDKSCAYCTDELFKERRCNTQADVLAAGCRGESVLVMESSLEITENIQIDTSLHRSQVSPQGLQVRLRPGEERNFVFKVFEPLESPVDLYILMDFSNSMSDDLDNLKQMGQNLAKILRQLTSDYTIGFGKFVDKVSVPQTDMRPEKLKEPWPNSDPPFSFKNVISLTENVEEFWDKLQGERISGNLDAPEGGFDAILQTAVCTRDIGWRADSTHLLVFSTESAFHYEADGANVLAGIMNRNDEKCHLDATGAYTQYKTQDYPSVPTLVRLLAKHNIIPIFAVTNYSYSYYEKLHKYFPVSSLGVLQEDSSNIVELLEEAFYRIRSNLDIRALDSPRGLRTEVTSDTLQKTETGSFHIKRGEVGTYNVHLRAVEDIDGTHVCQLAKEDQRGNIHLKPSFSDGLRMDASVICDMCACELQKEVQSARCHYRGDFMCGHCVCNEGWSGKTCNCSTGSLSDTQPCLREGEDKPCSGHGECQCGRCVCYGEGRYEGHFCEYDNFQCPRTSGFLCNDRGRCSMGECVCEPGWTGRSCDCPLSNATCIDSNGGICNGLGFCECGRCHCNQRSSLYTDTTCEINYSAIRLGLCEDLRSCVQCQAWGTGEKKGRTCEECNFKVKMVDELKKAEEVVEYCSFRDEDDDCTYSYTVEGDGSPGPNSTVLVHKKKDCLPAPSWWLIPLLIFLLLLLVLLLLLCWKYCACCKACLGLLPCCNQGHMVGFKEDHYMLRENLMASDHLDTPMLRSGNLKGRDTVRWKITNNVQRPGFATHAASISPTELVPYGLSLRLGRLCTENLMKPGTRECDQLRQEVEENLNEVYRQVNGVHKLQQTKFRQQPNAGKKQDHTIVDTVLLAPRSAKQSLLKLTEKQVEQGSFHELKVAPGYYTLTAEQDARGMVEFQEGVELVDVRVPLFIRPEDDDEKQLLVEAIDVPVGTATLGRRLVNITIIKEQASGIVSFEQPEYSVSRGDQVARIPVIRHILDNGKSQVSYSTQDNTAHGHRDYVPVEGELLFYPGETWKELQVKLLELQEVDSLLRGRQVRRFQVQLSNPKFGARLGQPNTATVIIGEQDETDRSLINEISASPPLPRGDLGAPQNPNAKAAGSRKIHFNWLPPPGKPMGYRVKYWVQGDSESEAHLLDSKVPSVELTNLYPYCDYEMKVCAYGAHGEGPYSSLVSCRTHQEVPSEPGRLAFNVVSSTVTQLSWAEPAETNGEITAYEVCYGLVNEDNRPIGPMKKVLVDNPKNRMLLIENLRESQPYRYTVKARNGAGWGPEREAIINLATQPKRPMSIPIIPDIPIVDAQGGEDYENFLMYSDDVLRSPASSQRPSVSDDTEHLVNGRMDFAYPGSANSLHRMTAANVAYGTHLSPHQTHRMLSTSSTLTRDYHSLTRTDHSQSGTLPRDYSTLTSLSSQGLPPIWEDGRSRLPLSWTLGSWSRAQMKGVPASRGSPDSIILAGQSAAPSWGTDSRGAMGVPDTPTRLVFSALGPTSLKVSWQEPQCDRALLGYSVEYQLLNGGEMHRLNIPNPGQTSVVVEDLLPNHSYVFRVRAQSQEGWGREREGVITIESQVHPQSPLCPLPGSAFTLSTPSAPGPLVFTALSPDSLQLSWERPRRPNGDILGYLVTCEMAQGGGPARTFRVDGDNPESRLTVPGLSENVPYKFKVQARTTEGFGPEREGIITIESQDGGPFPQLGSHSGLFQNPLQSEYSTVTSTHSTTTTEPFLIDGLTLGTQRLEAGGSLTRHVTQEFVSRTLTTSGSLSTHMDQQFFQT.

The signal sequence occupies residues 1–27; that stretch reads MAGLCSSPWVKLLLAVVLSAGLPGNMA. The Extracellular portion of the chain corresponds to 28 to 713; sequence NRCKKAQVKS…KKKDCLPAPS (686 aa). The region spanning 29-73 is the PSI domain; the sequence is RCKKAQVKSCTECIRVDKSCAYCTDELFKERRCNTQADVLAAGCR. 8 disulfide bridges follow: Cys-30–Cys-48, Cys-38–Cys-456, Cys-41–Cys-61, Cys-51–Cys-72, Cys-245–Cys-288, Cys-458–Cys-477, Cys-469–Cys-480, and Cys-482–Cys-491. Positions 131 to 340 constitute a VWFA domain; the sequence is DLYILMDFSN…SYYEKLHKYF (210 aa). Mg(2+) is bound by residues Ser-139 and Ser-141. Ca(2+)-binding residues include Ser-141, Asp-144, Asp-145, and Asp-176. The involved in NRG1- and IGF1-binding stretch occupies residues 194–199; it reads WPNSDP. Residues Asn-228, Asp-230, Pro-232, and Glu-233 each contribute to the Ca(2+) site. Glu-233 contributes to the Mg(2+) binding site. N-linked (GlcNAc...) asparagine glycosylation is present at Asn-327. Ca(2+) is bound at residue Glu-350. I-EGF domains are found at residues 458 to 492, 493 to 538, 539 to 575, and 576 to 617; these read CELQKEVQSARCHYRGDFMCGHCVCNEGWSGKTCN, CSTG…HFCE, YDNFQCPRTSGFLCNDRGRCSMGECVCEPGWTGRSCD, and CPLS…TTCE. N-linked (GlcNAc...) asparagine glycosylation occurs at Asn-492. 11 disulfide bridges follow: Cys-493-Cys-521, Cys-504-Cys-519, Cys-513-Cys-524, Cys-526-Cys-537, Cys-544-Cys-558, Cys-552-Cys-563, Cys-565-Cys-574, Cys-576-Cys-599, Cys-583-Cys-597, Cys-591-Cys-602, and Cys-604-Cys-616. N-linked (GlcNAc...) asparagine glycosylation occurs at Asn-580. Asn-619 is a glycosylation site (N-linked (GlcNAc...) asparagine). Disulfide bonds link Cys-628–Cys-673, Cys-634–Cys-653, Cys-637–Cys-650, and Cys-682–Cys-708. Asn-697 carries an N-linked (GlcNAc...) asparagine glycan. Residues 714–734 traverse the membrane as a helical segment; the sequence is WWLIPLLIFLLLLLVLLLLLC. The segment at 734–751 is palmitoylated on several cysteines; sequence CWKYCACCKACLGLLPCC. At 735–1807 the chain is on the cytoplasmic side; that stretch reads WKYCACCKAC…THMDQQFFQT (1073 aa). Ser-773, Ser-1071, and Ser-1121 each carry phosphoserine. One can recognise a Calx-beta domain in the interval 981–1086; the sequence is VNITIIKEQA…QVRRFQVQLS (106 aa). The segment at 1119–1141 is disordered; that stretch reads SASPPLPRGDLGAPQNPNAKAAG. 2 Fibronectin type-III domains span residues 1131 to 1220 and 1224 to 1323; these read APQN…THQE and EPGR…TQPK. Ser-1386, Ser-1389, and Ser-1405 each carry phosphoserine. Thr-1418 carries the post-translational modification Phosphothreonine. Ser-1425 is modified (phosphoserine). Residue Thr-1514 is modified to Phosphothreonine. Fibronectin type-III domains lie at 1514-1609 and 1627-1723; these read TPTR…VHPQ and APGP…SQDG. Ser-1776 bears the Phosphoserine mark.

It belongs to the integrin beta chain family. In terms of assembly, heterodimer of an alpha and a beta subunit. Beta-4 associates with alpha-6. Interacts (via cytoplasmic region) with COL17A1 (via cytoplasmic region). Interacts (via cytoplasmic region) with DST isoform 3 (via N-terminus). Interacts (via cytoplasmic domain) with DST (via N-terminus). Interacts with RAC1. ITGA6:ITGB4 is found in a ternary complex with NRG1 and ERBB3. ITGA6:ITGB4 is found in a ternary complex with IGF1 and IGF1R. ITGA6:ITGB4 interacts with IGF2. Interacts with TMEM268; this interaction prevents ITGB4 degradation. Palmitoylated by DHHC3 at several cysteines of the membrane-proximal region, enhancing stability and cell surface expression. Palmitoylation also promotes secondary association with tertaspanins.

Its subcellular location is the cell membrane. It localises to the cell junction. It is found in the hemidesmosome. Its function is as follows. Integrin alpha-6/beta-4 is a receptor for laminin. It plays a critical structural role in the hemidesmosome of epithelial cells. Is required for the regulation of keratinocyte polarity and motility. ITGA6:ITGB4 binds to NRG1 (via EGF domain) and this binding is essential for NRG1-ERBB signaling. ITGA6:ITGB4 binds to IGF1 and this binding is essential for IGF1 signaling. ITGA6:ITGB4 binds to IGF2 and this binding is essential for IGF2 signaling. This is Integrin beta-4 (Itgb4) from Rattus norvegicus (Rat).